A 578-amino-acid polypeptide reads, in one-letter code: Isocitrate dehydrogenase kinase/phosphatase (578 aa).

Residues 315 to 321 and Lys-336 contribute to the ATP site; that span reads APGIRGM. The active site involves Asp-371.

The protein belongs to the AceK family.

It localises to the cytoplasm. The catalysed reaction is L-seryl-[isocitrate dehydrogenase] + ATP = O-phospho-L-seryl-[isocitrate dehydrogenase] + ADP + H(+). Bifunctional enzyme which can phosphorylate or dephosphorylate isocitrate dehydrogenase (IDH) on a specific serine residue. This is a regulatory mechanism which enables bacteria to bypass the Krebs cycle via the glyoxylate shunt in response to the source of carbon. When bacteria are grown on glucose, IDH is fully active and unphosphorylated, but when grown on acetate or ethanol, the activity of IDH declines drastically concomitant with its phosphorylation. This chain is Isocitrate dehydrogenase kinase/phosphatase, found in Escherichia coli O139:H28 (strain E24377A / ETEC).